The sequence spans 408 residues: L,D-transpeptidase 2 (408 aa).

The N-terminal stretch at 1–34 is a signal peptide; that stretch reads MPKVGIAAQAGRTRVRRAWLTALMMTAVMIGAVA. Residue Cys35 is the site of N-palmitoyl cysteine attachment. Cys35 is lipidated: S-diacylglycerol cysteine. The Ca(2+) site is built by Asp232, Glu235, and Gly236. Positions 253-378 constitute a L,D-TPase catalytic domain; that stretch reads VIATADDNTK…VKRGDIVEVV (126 aa). Substrate contacts are provided by residues Tyr318 and 331–332; that span reads SG. The Proton donor/acceptor role is filled by His336. Cys354 functions as the Nucleophile in the catalytic mechanism. Asn356 serves as a coordination point for substrate.

In terms of assembly, monomer.

The protein resides in the cell membrane. It functions in the pathway cell wall biogenesis; peptidoglycan biosynthesis. Its activity is regulated as follows. Is irreversibly inactivated by the beta-lactams carbapenems via the formation of a covalent adduct resulting from acylation of the catalytic Cys. Its function is as follows. Generates 3-&gt;3 cross-links in peptidoglycan, catalyzing the cleavage of the mDap(3)-D-Ala(4) bond of a tetrapeptide donor stem and the formation of a bond between the carbonyl of mDap(3) of the donor stem and the side chain of mDap(3) of the acceptor stem. Is specific for donor substrates containing a stem tetrapeptide since it cannot use pentapeptide stems. Is essential for virulence in a mouse model of acute infection. The chain is L,D-transpeptidase 2 (ldtB) from Mycobacterium tuberculosis (strain CDC 1551 / Oshkosh).